A 198-amino-acid chain; its full sequence is FMN-dependent NADH:quinone oxidoreductase (198 aa).

FMN is bound by residues methionine 92–leucine 95 and serine 136–glycine 139.

Belongs to the azoreductase type 1 family. As to quaternary structure, homodimer. The cofactor is FMN.

It carries out the reaction 2 a quinone + NADH + H(+) = 2 a 1,4-benzosemiquinone + NAD(+). The enzyme catalyses N,N-dimethyl-1,4-phenylenediamine + anthranilate + 2 NAD(+) = 2-(4-dimethylaminophenyl)diazenylbenzoate + 2 NADH + 2 H(+). Functionally, quinone reductase that provides resistance to thiol-specific stress caused by electrophilic quinones. In terms of biological role, also exhibits azoreductase activity. Catalyzes the reductive cleavage of the azo bond in aromatic azo compounds to the corresponding amines. The polypeptide is FMN-dependent NADH:quinone oxidoreductase (Clostridium perfringens (strain SM101 / Type A)).